The following is a 95-amino-acid chain: Small ribosomal subunit protein uS19 (95 aa).

The segment at 73–95 is disordered; sequence EFSPTRTYRGHGADKNAKGSKKK.

This sequence belongs to the universal ribosomal protein uS19 family.

Functionally, protein S19 forms a complex with S13 that binds strongly to the 16S ribosomal RNA. This is Small ribosomal subunit protein uS19 from Deinococcus radiodurans (strain ATCC 13939 / DSM 20539 / JCM 16871 / CCUG 27074 / LMG 4051 / NBRC 15346 / NCIMB 9279 / VKM B-1422 / R1).